The sequence spans 188 residues: Probable manganese efflux pump MntP (188 aa).

The next 5 membrane-spanning stretches (helical) occupy residues 3-23 (ITAT…ASIG), 66-86 (LEWN…RMII), 106-128 (WLLV…GLAF), 143-163 (ATLI…SIIG), and 168-188 (ILGG…HFHG).

It belongs to the MntP (TC 9.B.29) family.

It is found in the cell inner membrane. Functionally, probably functions as a manganese efflux pump. This Shigella flexneri serotype 5b (strain 8401) protein is Probable manganese efflux pump MntP.